We begin with the raw amino-acid sequence, 553 residues long: Dihydroxy-acid dehydratase (553 aa).

Mg(2+) is bound at residue aspartate 78. Cysteine 119 contributes to the [2Fe-2S] cluster binding site. 2 residues coordinate Mg(2+): aspartate 120 and lysine 121. Lysine 121 bears the N6-carboxylysine mark. Cysteine 193 is a [2Fe-2S] cluster binding site. Position 441 (glutamate 441) interacts with Mg(2+). Residue serine 467 is the Proton acceptor of the active site.

It belongs to the IlvD/Edd family. Homodimer. The cofactor is [2Fe-2S] cluster. Mg(2+) serves as cofactor.

The catalysed reaction is (2R)-2,3-dihydroxy-3-methylbutanoate = 3-methyl-2-oxobutanoate + H2O. It carries out the reaction (2R,3R)-2,3-dihydroxy-3-methylpentanoate = (S)-3-methyl-2-oxopentanoate + H2O. It participates in amino-acid biosynthesis; L-isoleucine biosynthesis; L-isoleucine from 2-oxobutanoate: step 3/4. It functions in the pathway amino-acid biosynthesis; L-valine biosynthesis; L-valine from pyruvate: step 3/4. Functions in the biosynthesis of branched-chain amino acids. Catalyzes the dehydration of (2R,3R)-2,3-dihydroxy-3-methylpentanoate (2,3-dihydroxy-3-methylvalerate) into 2-oxo-3-methylpentanoate (2-oxo-3-methylvalerate) and of (2R)-2,3-dihydroxy-3-methylbutanoate (2,3-dihydroxyisovalerate) into 2-oxo-3-methylbutanoate (2-oxoisovalerate), the penultimate precursor to L-isoleucine and L-valine, respectively. In Geotalea daltonii (strain DSM 22248 / JCM 15807 / FRC-32) (Geobacter daltonii), this protein is Dihydroxy-acid dehydratase.